Consider the following 367-residue polypeptide: Chorismate synthase (367 aa).

NADP(+)-binding residues include arginine 48 and arginine 54. Residues 125 to 127, 238 to 239, glycine 278, 293 to 297, and arginine 319 contribute to the FMN site; these read RSS, NA, and KPTSS.

Belongs to the chorismate synthase family. In terms of assembly, homotetramer. FMNH2 serves as cofactor.

The enzyme catalyses 5-O-(1-carboxyvinyl)-3-phosphoshikimate = chorismate + phosphate. It participates in metabolic intermediate biosynthesis; chorismate biosynthesis; chorismate from D-erythrose 4-phosphate and phosphoenolpyruvate: step 7/7. Its function is as follows. Catalyzes the anti-1,4-elimination of the C-3 phosphate and the C-6 proR hydrogen from 5-enolpyruvylshikimate-3-phosphate (EPSP) to yield chorismate, which is the branch point compound that serves as the starting substrate for the three terminal pathways of aromatic amino acid biosynthesis. This reaction introduces a second double bond into the aromatic ring system. The sequence is that of Chorismate synthase from Xanthomonas campestris pv. campestris (strain B100).